Consider the following 186-residue polypeptide: NADH-quinone oxidoreductase subunit I (186 aa).

2 consecutive 4Fe-4S ferredoxin-type domains span residues 70 to 100 and 113 to 142; these read LTTR…IQSA and DRFE…MSKD. [4Fe-4S] cluster contacts are provided by Cys-80, Cys-83, Cys-86, Cys-90, Cys-122, Cys-125, Cys-128, and Cys-132.

Belongs to the complex I 23 kDa subunit family. NDH-1 is composed of 14 different subunits. Subunits NuoA, H, J, K, L, M, N constitute the membrane sector of the complex. [4Fe-4S] cluster serves as cofactor.

Its subcellular location is the cell inner membrane. It catalyses the reaction a quinone + NADH + 5 H(+)(in) = a quinol + NAD(+) + 4 H(+)(out). NDH-1 shuttles electrons from NADH, via FMN and iron-sulfur (Fe-S) centers, to quinones in the respiratory chain. The immediate electron acceptor for the enzyme in this species is believed to be ubiquinone. Couples the redox reaction to proton translocation (for every two electrons transferred, four hydrogen ions are translocated across the cytoplasmic membrane), and thus conserves the redox energy in a proton gradient. This is NADH-quinone oxidoreductase subunit I from Pelobacter propionicus (strain DSM 2379 / NBRC 103807 / OttBd1).